A 152-amino-acid polypeptide reads, in one-letter code: Small ribosomal subunit protein uS13 (152 aa).

The interval 133 to 152 is disordered; that stretch reads GQHTKTTGRRGRTVGVSKKK.

The protein belongs to the universal ribosomal protein uS13 family.

Its subcellular location is the cytoplasm. In terms of biological role, located at the top of the head of the 40S subunit, it contacts several helices of the 18S rRNA. This chain is Small ribosomal subunit protein uS13 (RpS18), found in Spodoptera frugiperda (Fall armyworm).